Here is a 744-residue protein sequence, read N- to C-terminus: Zinc finger protein 483 (744 aa).

The SCAN box domain occupies 52-134 (RQRFRWFCYS…TLIEDLTQML (83 aa)). Residues 137–156 (KDPVSQDSTVSQEENSKEDK) are disordered. The KRAB domain occupies 170–241 (ITLKDVAVNF…EEVSKSSRLD (72 aa)). Disordered stretches follow at residues 263–308 (ESQQ…SPFG) and 350–385 (KEKT…KIHL). A compositionally biased stretch (polar residues) spans 277 to 293 (NQGNSKGRVAQNKTLGS). Composition is skewed to basic and acidic residues over residues 298–308 (KKFDPDKSPFG) and 350–363 (KEKT…KSND). 11 C2H2-type zinc fingers span residues 439–461 (HKCS…RRIH), 467–489 (YMCN…HRTH), 495–517 (FKCD…QRIH), 523–545 (YKCK…QRIH), 551–573 (YTCS…QRIH), 579–601 (YKCG…QRIH), 607–629 (YLCN…QRLH), 635–657 (YKCN…QRIH), 663–685 (YKCK…HRIH), 691–713 (YECN…LKIH), and 719–741 (YECN…RGFH).

It belongs to the krueppel C2H2-type zinc-finger protein family.

It is found in the nucleus. In terms of biological role, may be involved in transcriptional regulation. The chain is Zinc finger protein 483 (ZNF483) from Homo sapiens (Human).